Reading from the N-terminus, the 438-residue chain is Xylose isomerase (438 aa).

2 residues coordinate Mg(2+): Asp306 and Asp308.

Belongs to the xylose isomerase family. Homotetramer. Mg(2+) serves as cofactor.

The protein resides in the cytoplasm. The catalysed reaction is alpha-D-xylose = alpha-D-xylulofuranose. This Pseudomonas fluorescens (strain SBW25) protein is Xylose isomerase.